Reading from the N-terminus, the 642-residue chain is Wall-associated receptor kinase-like 6 (642 aa).

The first 28 residues, 1-28 (MKKTKTYQVFCIAALSVLTLQLINGSSA), serve as a signal peptide directing secretion. At 29-357 (ATPPPPNSNS…PKITKPEKAS (329 aa)) the chain is on the extracellular side. N-linked (GlcNAc...) asparagine glycosylation is found at Asn37, Asn72, Asn95, Asn137, Asn216, Asn240, and Asn276. The segment at 289–346 (CSCEYDYFSGMSYRICYCNYGYTGNPYLRHGCIDIDECEGHHNCGEGTCVNMPGTHSC) is atypical EGF-like. 3 cysteine pairs are disulfide-bonded: Cys291-Cys304, Cys326-Cys337, and Cys332-Cys346. The chain crosses the membrane as a helical span at residues 358–378 (VLQGVLISLGVLLFVLGILGL). Over 379–642 (YKFIKKRTRI…KPLSRKRIGN (264 aa)) the chain is Cytoplasmic. In terms of domain architecture, Protein kinase spans 432–642 (FSMNRVLGQG…KPLSRKRIGN (211 aa)). ATP-binding positions include 438–446 (LGQGGQGTV) and Lys460. At Tyr505 the chain carries Phosphotyrosine. The active-site Proton acceptor is the Asp559. A phosphothreonine mark is found at Thr593 and Thr598. Residue Tyr606 is modified to Phosphotyrosine.

Belongs to the protein kinase superfamily. Ser/Thr protein kinase family. Slightly expressed in the whole plant.

It is found in the membrane. It carries out the reaction L-seryl-[protein] + ATP = O-phospho-L-seryl-[protein] + ADP + H(+). The catalysed reaction is L-threonyl-[protein] + ATP = O-phospho-L-threonyl-[protein] + ADP + H(+). Serine/threonine-protein kinase that may function as a signaling receptor of extracellular matrix component. The chain is Wall-associated receptor kinase-like 6 (WAKL6) from Arabidopsis thaliana (Mouse-ear cress).